Consider the following 261-residue polypeptide: Small ribosomal subunit protein mS23 (261 aa).

Positions 228 to 261 (EQRAAAFTGAPEIPSTEDSLGLEEGVEEKQPQQA) are disordered.

It belongs to the mitochondrion-specific ribosomal protein mS23 family. In terms of assembly, component of the mitochondrial small ribosomal subunit.

The protein resides in the mitochondrion. The polypeptide is Small ribosomal subunit protein mS23 (rsm25) (Aspergillus oryzae (strain ATCC 42149 / RIB 40) (Yellow koji mold)).